The sequence spans 308 residues: N-acetylmuramic acid 6-phosphate etherase (308 aa).

The 164-residue stretch at 62-225 (TAARLRQGGR…STGVMVQLGK (164 aa)) folds into the SIS domain. The active-site Proton donor is Glu90. Residue Glu121 is part of the active site.

This sequence belongs to the GCKR-like family. MurNAc-6-P etherase subfamily. As to quaternary structure, homodimer.

It catalyses the reaction N-acetyl-D-muramate 6-phosphate + H2O = N-acetyl-D-glucosamine 6-phosphate + (R)-lactate. It functions in the pathway amino-sugar metabolism; N-acetylmuramate degradation. In terms of biological role, specifically catalyzes the cleavage of the D-lactyl ether substituent of MurNAc 6-phosphate, producing GlcNAc 6-phosphate and D-lactate. The chain is N-acetylmuramic acid 6-phosphate etherase from Thermosynechococcus vestitus (strain NIES-2133 / IAM M-273 / BP-1).